A 438-amino-acid polypeptide reads, in one-letter code: GTPase Obg (438 aa).

An Obg domain is found at 2–160 (SMFLDQVTID…RKIELELKVL (159 aa)). Residues 128-147 (NIRFASPRNPAPEIAENGEP) form a disordered region. The region spanning 161-339 (ADVGLVGFPS…LLNATADLLE (179 aa)) is the OBG-type G domain. GTP-binding positions include 167-174 (GFPSVGKS), 192-196 (FTTLV), 214-217 (DLPG), 284-287 (NKMD), and 320-322 (SGV). Mg(2+) is bound by residues Ser-174 and Thr-194. Positions 360–438 (GFQPEGPEFT…IGNFEFEFVE (79 aa)) constitute an OCT domain.

Belongs to the TRAFAC class OBG-HflX-like GTPase superfamily. OBG GTPase family. Monomer. Mg(2+) is required as a cofactor.

It is found in the cytoplasm. An essential GTPase which binds GTP, GDP and possibly (p)ppGpp with moderate affinity, with high nucleotide exchange rates and a fairly low GTP hydrolysis rate. Plays a role in control of the cell cycle, stress response, ribosome biogenesis and in those bacteria that undergo differentiation, in morphogenesis control. This Enterococcus faecalis (strain ATCC 700802 / V583) protein is GTPase Obg.